Here is a 248-residue protein sequence, read N- to C-terminus: MKTLILLIQFFTRIPLPVQINMDEINLKKGSALLPFVGVIIGAWNWLIFTLVALLMPLPVAIIAGLFAEIIITGGFHVDALADTADGLFSSRKRERMLEIMKDSRVGANGVIAICFYFLFYGSLFLSVPDTQQIGWLFFVLPIVAKGVTMLLFAKMTYAGSKEGLGSIFLGVPWWPVVIAQVIVLVALGAFFSYIGVIAYAGVILFTIIYRAFVYKRIGGMNGDTLGAGGQMGQLICLFCLVLLWGLI.

Transmembrane regions (helical) follow at residues 24 to 44 (EINL…IGAW), 70 to 90 (IIIT…GLFS), 106 to 126 (VGAN…SLFL), 134 to 154 (IGWL…LLFA), 168 to 188 (IFLG…LVAL), 189 to 209 (GAFF…FTII), and 228 to 248 (AGGQ…WGLI).

Belongs to the CobS family. Mg(2+) serves as cofactor.

It localises to the cell membrane. It catalyses the reaction alpha-ribazole + adenosylcob(III)inamide-GDP = adenosylcob(III)alamin + GMP + H(+). It carries out the reaction alpha-ribazole 5'-phosphate + adenosylcob(III)inamide-GDP = adenosylcob(III)alamin 5'-phosphate + GMP + H(+). Its pathway is cofactor biosynthesis; adenosylcobalamin biosynthesis; adenosylcobalamin from cob(II)yrinate a,c-diamide: step 7/7. Its function is as follows. Joins adenosylcobinamide-GDP and alpha-ribazole to generate adenosylcobalamin (Ado-cobalamin). Also synthesizes adenosylcobalamin 5'-phosphate from adenosylcobinamide-GDP and alpha-ribazole 5'-phosphate. This chain is Adenosylcobinamide-GDP ribazoletransferase, found in Listeria monocytogenes serotype 4b (strain F2365).